Consider the following 778-residue polypeptide: Endonuclease MutS2 (778 aa).

Residue 328 to 335 coordinates ATP; the sequence is GPNTGGKT. In terms of domain architecture, Smr spans 702-777; the sequence is LDLRGKRYEE…GSGATIVTFK (76 aa).

This sequence belongs to the DNA mismatch repair MutS family. MutS2 subfamily. In terms of assembly, homodimer. Binds to stalled ribosomes, contacting rRNA.

Endonuclease that is involved in the suppression of homologous recombination and thus may have a key role in the control of bacterial genetic diversity. Functionally, acts as a ribosome collision sensor, splitting the ribosome into its 2 subunits. Detects stalled/collided 70S ribosomes which it binds and splits by an ATP-hydrolysis driven conformational change. Acts upstream of the ribosome quality control system (RQC), a ribosome-associated complex that mediates the extraction of incompletely synthesized nascent chains from stalled ribosomes and their subsequent degradation. Probably generates substrates for RQC. This chain is Endonuclease MutS2, found in Streptococcus pneumoniae serotype 2 (strain D39 / NCTC 7466).